The primary structure comprises 193 residues: Potassium-transporting ATPase KdpC subunit (193 aa).

A helical membrane pass occupies residues 14-34; the sequence is ITFTFLVLCGLVYPLIVTGIA.

It belongs to the KdpC family. In terms of assembly, the system is composed of three essential subunits: KdpA, KdpB and KdpC.

The protein resides in the cell membrane. In terms of biological role, part of the high-affinity ATP-driven potassium transport (or Kdp) system, which catalyzes the hydrolysis of ATP coupled with the electrogenic transport of potassium into the cytoplasm. This subunit acts as a catalytic chaperone that increases the ATP-binding affinity of the ATP-hydrolyzing subunit KdpB by the formation of a transient KdpB/KdpC/ATP ternary complex. The protein is Potassium-transporting ATPase KdpC subunit of Bacillus anthracis (strain A0248).